Here is a 554-residue protein sequence, read N- to C-terminus: Formate--tetrahydrofolate ligase (554 aa).

Residue 63–70 (TPAGEGKT) coordinates ATP.

It belongs to the formate--tetrahydrofolate ligase family.

The enzyme catalyses (6S)-5,6,7,8-tetrahydrofolate + formate + ATP = (6R)-10-formyltetrahydrofolate + ADP + phosphate. Its pathway is one-carbon metabolism; tetrahydrofolate interconversion. The sequence is that of Formate--tetrahydrofolate ligase from Halothermothrix orenii (strain H 168 / OCM 544 / DSM 9562).